The primary structure comprises 2346 residues: Acetyl-CoA carboxylase 1 (2346 aa).

An N-acetylmethionine modification is found at M1. S5, S23, S25, S29, S34, S48, S50, and S53 each carry phosphoserine. T58 is modified (phosphothreonine). A Phosphoserine modification is found at S78. S80 is subject to Phosphoserine; by AMPK. Residues 117 to 618 form the Biotin carboxylation domain; the sequence is VIEKVLIANN…GTGWLDRLIA (502 aa). One can recognise an ATP-grasp domain in the interval 275–466; the sequence is SKRILNVPQE…LPAAQLQIAM (192 aa). 315 to 320 provides a ligand contact to ATP; that stretch reads GGGGKG. Mg(2+) contacts are provided by E424, E437, and N439. Residues E424, E437, and N439 each coordinate Mn(2+). The active site involves R441. Residue T610 is modified to Phosphothreonine. The region spanning 745–819 is the Biotinyl-binding domain; the sequence is FEKENDPSVL…DPGCVIAKMQ (75 aa). Position 786 is an N6-biotinyllysine (K786). 4 positions are modified to phosphoserine: S835, S1201, S1216, and S1218. At T1227 the chain carries Phosphothreonine. Phosphoserine occurs at positions 1259, 1263, and 1273. The residue at position 1334 (K1334) is an N6-acetyllysine. Positions 1576–1914 constitute a CoA carboxyltransferase N-terminal domain; sequence PYVTKDQLQS…SVYSSVPLLN (339 aa). The segment at 1576-2234 is carboxyltransferase; it reads PYVTKDQLQS…EDLVKKKIHN (659 aa). Residues R1823, K2127, and R2129 each coordinate CoA. The region spanning 1918 to 2234 is the CoA carboxyltransferase C-terminal domain; it reads PIDRVIEFVP…EDLVKKKIHN (317 aa). At T2153 the chain carries Phosphothreonine.

As to quaternary structure, monomer, homodimer, and homotetramer. Can form filamentous polymers. Interacts in its inactive phosphorylated form with the BRCT domains of BRCA1 which prevents ACACA dephosphorylation and inhibits lipid synthesis. Interacts with MID1IP1; interaction with MID1IP1 promotes oligomerization and increases its activity. It depends on Mg(2+) as a cofactor. Requires Mn(2+) as cofactor. Biotin serves as cofactor. In terms of processing, phosphorylation on Ser-1263 is required for interaction with BRCA1. Post-translationally, phosphorylation at Ser-80 by AMPK inactivates enzyme activity. The biotin cofactor is covalently attached to the central biotinyl-binding domain and is required for the catalytic activity.

It localises to the cytoplasm. It is found in the cytosol. The catalysed reaction is hydrogencarbonate + acetyl-CoA + ATP = malonyl-CoA + ADP + phosphate + H(+). The protein operates within lipid metabolism; malonyl-CoA biosynthesis; malonyl-CoA from acetyl-CoA: step 1/1. With respect to regulation, inhibited by phosphorylation. Citrate promotes oligomerization of the protein into filaments that correspond to the most active form of the carboxylase. In terms of biological role, cytosolic enzyme that catalyzes the carboxylation of acetyl-CoA to malonyl-CoA, the first and rate-limiting step of de novo fatty acid biosynthesis. This is a 2 steps reaction starting with the ATP-dependent carboxylation of the biotin carried by the biotin carboxyl carrier (BCC) domain followed by the transfer of the carboxyl group from carboxylated biotin to acetyl-CoA. This Bos taurus (Bovine) protein is Acetyl-CoA carboxylase 1.